We begin with the raw amino-acid sequence, 551 residues long: Glucans biosynthesis protein D (551 aa).

The tat-type signal signal peptide spans 1-32 (MNRRRFIKGSMAMAAVCGSSGIASLFSQAAFA).

The protein belongs to the OpgD/OpgG family. In terms of processing, predicted to be exported by the Tat system. The position of the signal peptide cleavage has not been experimentally proven.

It localises to the periplasm. The protein operates within glycan metabolism; osmoregulated periplasmic glucan (OPG) biosynthesis. Its function is as follows. Probably involved in the control of the structural glucose backbone of osmoregulated periplasmic glucans (OPGs). The chain is Glucans biosynthesis protein D from Salmonella paratyphi A (strain ATCC 9150 / SARB42).